Here is a 301-residue protein sequence, read N- to C-terminus: Acetylglutamate kinase (301 aa).

Residues 68-69 (GG), Arg90, and Asn195 each bind substrate.

This sequence belongs to the acetylglutamate kinase family. ArgB subfamily.

Its subcellular location is the cytoplasm. The catalysed reaction is N-acetyl-L-glutamate + ATP = N-acetyl-L-glutamyl 5-phosphate + ADP. It participates in amino-acid biosynthesis; L-arginine biosynthesis; N(2)-acetyl-L-ornithine from L-glutamate: step 2/4. Catalyzes the ATP-dependent phosphorylation of N-acetyl-L-glutamate. The sequence is that of Acetylglutamate kinase from Pseudomonas putida (strain W619).